Here is a 714-residue protein sequence, read N- to C-terminus: Solute carrier family 12 member 8 (714 aa).

The next 6 membrane-spanning stretches (helical) occupy residues 37-60 (VLFGTWDGVFTSCMINIFGVVLFL), 72-93 (LLGMFLVSFVILVALVTVLSGI), 99-116 (SSIGSGGVYSMISSVLGG), 123-142 (GLLYVFGQCVAGAMYITGFA), 154-173 (IWAVRGISVAVLLALLGINL), and 185-205 (LLLFLLAVSTLDFVVGSFTHL). A glycan (N-linked (GlcNAc...) asparagine) is linked at asparagine 221. 5 consecutive transmembrane segments (helical) span residues 233 to 254 (FFTVFGVFFPAATGVMAGFNMG), 266 to 289 (LGSLAAVGISWFLYIIFVFLLGAI), 309 to 331 (GFLFLLGLYISSLASCMGGLYGA), 360 to 377 (PVAAICLTSLVTMAFVFV), and 383 to 403 (LAPIVTINFMLTYVAVDYSYF). 2 disordered regions span residues 471–503 (KLESSQPRQGEGNRTPESQKRKSKKATKQTLQD) and 530–550 (GQESCWNKQTSKSEGTQPEGT). Residues 533-548 (SCWNKQTSKSEGTQPE) are compositionally biased toward polar residues. 2 consecutive transmembrane segments (helical) span residues 593–616 (CNPWVSLLGAVGSLLIMFVIQWVY) and 622–643 (GVAAIVYFYIGRASPGLHLGSA).

It belongs to the SLC12A transporter family. In terms of tissue distribution, ubiquitous with very low level in normal skin.

Its subcellular location is the membrane. Cation/chloride cotransporter that may play a role in the control of keratinocyte proliferation. The chain is Solute carrier family 12 member 8 (SLC12A8) from Homo sapiens (Human).